We begin with the raw amino-acid sequence, 590 residues long: MSLPETKSDDILLDAWDFQGRPADRSKTGGWASAAMILCIEAVERLTTLGIGVNLVTYLTGTMHLGNATAANTVTNFLGTSFMLCLLGGFIADTFLGRYLTIAIFAAIQATGVSILTLSTIIPGLRPPRCNPTTSSHCEQASGIQLTVLYLALYLTALGTGGVKASVSGFGSDQFDETEPKERSKMTYFFNRFFFCINVGSLLAVTVLVYVQDDVGRKWGYGICAFAIVLALSVFLAGTNRYRFKKLIGSPMTQVAAVIVAAWRNRKLELPADPSYLYDVDDIIAAEGSMKGKQKLPHTEQFRSLDKAAIRDQEAGVTSNVFNKWTLSTLTDVEEVKQIVRMLPIWATCILFWTVHAQLTTLSVAQSETLDRSIGSFEIPPASMAVFYVGGLLLTTAVYDRVAIRLCKKLFNYPHGLRPLQRIGLGLFFGSMAMAVAALVELKRLRTAHAHGPTVKTLPLGFYLLIPQYLIVGIGEALIYTGQLDFFLRECPKGMKGMSTGLLLSTLALGFFFSSVLVTIVEKFTGKAHPWIADDLNKGRLYNFYWLVAVLVALNFLIFLVFSKWYVYKEKRLAEVGIELDDEPSIPMGH.

2 helical membrane-spanning segments follow: residues 46–66 and 77–97; these read LTTL…MHLG and FLGT…TFLG. Residue Thr101 is modified to Phosphothreonine; by CIPK23. 10 helical membrane passes run 102–122, 143–163, 193–213, 219–239, 342–362, 374–394, 423–443, 460–480, 501–521, and 542–562; these read IAIF…STII, GIQL…TGGV, FFFC…YVQD, WGYG…LAGT, MLPI…LTTL, IGSF…GLLL, IGLG…VELK, LGFY…ALIY, GLLL…VTIV, and YNFY…FLVF. The substrate site is built by His356 and Thr360.

The protein belongs to the major facilitator superfamily. Proton-dependent oligopeptide transporter (POT/PTR) (TC 2.A.17) family. Monomer and homodimer. The dimer has the 2 monomers in the same orientation. Interacts with CIPK23. Post-translationally, acts as a high-affinity nitrate transporter when phosphorylated and as a low-affinity transporter when dephosphorylated. Forms homodimer when unphosphorylated and monomer when phosphorylated. Low nitrogen concentration in the medium stimulates phosphorylation. Phosphorylation also regulates the nitrate signaling. Expressed in the stele in lateral root primordia before emergence and in the tip of primary and emerged lateral roots. Detected in emerging and immature leaves, guard cells, flower buds, style, stigma, anthers and pollen grains. Not detected in the shoot apical meristem.

Its subcellular location is the membrane. Dual affinity nitrate transporter. Involved in proton-dependent nitrate uptake and in the regulation of the nitrate transporter NRT2.1. Also acts as a nitrate sensor that trigger a specific signaling pathway stimulating lateral root growth and seed germination. The uptake activity is not required for sensor function. Displays an auxin transport facilitation inhibited by high nitrate concentration. Required to prevent auxin accumulation in preemerged lateral root primordia and young lateral roots when external nitrate concentration is low or null. May be involved in the basipetal transport of auxin out of the lateral root tips. Acts as a bidirectional transporter involved in root-to-shoot nitrate translocation. Recognizes specifically nitrate and chlorate, but not nitrite, alanine, sulfate, phosphate or the di-peptide Ala-Ala. This Arabidopsis thaliana (Mouse-ear cress) protein is Protein NRT1/ PTR FAMILY 6.3 (NPF6.3).